The sequence spans 353 residues: DNA polymerase IV (353 aa).

The 182-residue stretch at 6–187 folds into the UmuC domain; that stretch reads IIHIDCDCFY…LPVTKLHGVG (182 aa). Mg(2+)-binding residues include D10 and D105. Residue E106 is part of the active site.

This sequence belongs to the DNA polymerase type-Y family. Monomer. Requires Mg(2+) as cofactor.

It localises to the cytoplasm. The enzyme catalyses DNA(n) + a 2'-deoxyribonucleoside 5'-triphosphate = DNA(n+1) + diphosphate. In terms of biological role, poorly processive, error-prone DNA polymerase involved in untargeted mutagenesis. Copies undamaged DNA at stalled replication forks, which arise in vivo from mismatched or misaligned primer ends. These misaligned primers can be extended by PolIV. Exhibits no 3'-5' exonuclease (proofreading) activity. May be involved in translesional synthesis, in conjunction with the beta clamp from PolIII. The polypeptide is DNA polymerase IV (Pseudomonas savastanoi pv. phaseolicola (strain 1448A / Race 6) (Pseudomonas syringae pv. phaseolicola (strain 1448A / Race 6))).